Here is a 401-residue protein sequence, read N- to C-terminus: L-rhamnonate dehydratase (401 aa).

The substrate site is built by His-29 and Arg-55. 3 residues coordinate Mg(2+): Asp-222, Glu-248, and Glu-276. His-325 functions as the Proton acceptor in the catalytic mechanism. Residue Glu-345 participates in substrate binding.

The protein belongs to the mandelate racemase/muconate lactonizing enzyme family. RhamD subfamily. Homooctamer; tetramer of dimers. The cofactor is Mg(2+).

The catalysed reaction is L-rhamnonate = 2-dehydro-3-deoxy-L-rhamnonate + H2O. Its function is as follows. Catalyzes the dehydration of L-rhamnonate to 2-keto-3-deoxy-L-rhamnonate (KDR). The chain is L-rhamnonate dehydratase from Salmonella schwarzengrund (strain CVM19633).